We begin with the raw amino-acid sequence, 177 residues long: tRNA (cytidine(56)-2'-O)-methyltransferase (177 aa).

S-adenosyl-L-methionine contacts are provided by residues Leu-84 and 109–113; that span reads GAEKV.

This sequence belongs to the aTrm56 family. Homodimer.

It is found in the cytoplasm. It catalyses the reaction cytidine(56) in tRNA + S-adenosyl-L-methionine = 2'-O-methylcytidine(56) in tRNA + S-adenosyl-L-homocysteine + H(+). Specifically catalyzes the AdoMet-dependent 2'-O-ribose methylation of cytidine at position 56 in tRNAs. This chain is tRNA (cytidine(56)-2'-O)-methyltransferase, found in Methanosarcina acetivorans (strain ATCC 35395 / DSM 2834 / JCM 12185 / C2A).